The following is a 1729-amino-acid chain: Cullin-7 (1729 aa).

The disordered stretch occupies residues 350–388 (DRPRSSARSPGSIFQPQLADVSPGLPATQAQPSFRRSRH). The residue at position 371 (S371) is a Phosphoserine. Residues 392-465 (RSEFASGNTY…HWHMLEILGF (74 aa)) form the CPH domain. The segment covering 632-642 (SEDAAKVEAKE) has biased composition (basic and acidic residues). Residues 632–654 (SEDAAKVEAKEPPSQSPNTPLQR) form a disordered region. One can recognise a DOC domain in the interval 845–1024 (PINIPFFDVF…HTRLFYMVRA (180 aa)). The disordered stretch occupies residues 1373–1405 (VGHGASGKEHKSEKEEEAGAAAAVDVAEGEEEE). K1607 is covalently cross-linked (Glycyl lysine isopeptide (Lys-Gly) (interchain with G-Cter in NEDD8)).

This sequence belongs to the cullin family. In terms of assembly, component of the 3M complex, composed of core components CUL7, CCDC8 and OBSL1. Component of the Cul7-RING(FBXW8) complex consisting of CUL7, RBX1, SKP1 and FBXW8. Within the Cul7-RING(FBXW8) complex interacts with FBXW8 and RBX1, but not with SKP1. Interacts with CUL1 (via the C-terminal domain); the interaction seems to be mediated by FBXW8; it is likely specific to FBXW8, but not other F-box proteins. Interacts (via the CPH domain) with p53/TP53; the interaction preferentially involves tetrameric and dimeric p53/TP53; this interaction recruits p53/TP53 for ubiquitination by neddylated CUL1-RBX1. The CUL7-CUL9 heterodimer seems to interact specifically with p53/TP53. Interacts with FBXW8; interaction is mutually exclusive of binding to CUL9 or p53/TP53. Interacts with CUL9; leading to inhibited CUL9 activity. Interacts with OBSL1. Interacts (as part of the 3M complex) with HDAC4 and HDAC5; it is negatively regulated by ANKRA2.

Its subcellular location is the cytoplasm. The protein localises to the cytoskeleton. It is found in the microtubule organizing center. The protein resides in the centrosome. It localises to the perinuclear region. Its subcellular location is the golgi apparatus. It participates in protein modification; protein ubiquitination. Functionally, core component of the 3M and Cul7-RING(FBXW8) complexes, which mediate the ubiquitination and subsequent proteasomal degradation of target proteins. Core component of the 3M complex, a complex required to regulate microtubule dynamics and genome integrity. It is unclear how the 3M complex regulates microtubules, it could act by controlling the level of a microtubule stabilizer. The Cul7-RING(FBXW8) complex alone lacks ubiquitination activity and does not promote polyubiquitination and proteasomal degradation of p53/TP53. However it mediates recruitment of p53/TP53 for ubiquitination by neddylated CUL1-RBX1. Interaction with CUL9 is required to inhibit CUL9 activity and ubiquitination of BIRC5. The Cul7-RING(FBXW8) complex also mediates ubiquitination and consequent degradation of target proteins such as GORASP1, IRS1 and MAP4K1/HPK1. Ubiquitination of GORASP1 regulates Golgi morphogenesis and dendrite patterning in brain. Mediates ubiquitination and degradation of IRS1 in a mTOR-dependent manner: the Cul7-RING(FBXW8) complex recognizes and binds IRS1 previously phosphorylated by S6 kinase (RPS6KB1 or RPS6KB2). The Cul7-RING(FBXW8) complex also mediates ubiquitination of MAP4K1/HPK1: recognizes and binds autophosphorylated MAP4K1/HPK1, leading to its degradation, thereby affecting cell proliferation and differentiation. Acts as a regulator in trophoblast cell epithelial-mesenchymal transition and placental development. While the Cul7-RING(FBXW8) and the 3M complexes are associated and involved in common processes, CUL7 and the Cul7-RING(FBXW8) complex may have additional functions. Probably plays a role in the degradation of proteins involved in endothelial proliferation and/or differentiation. The chain is Cullin-7 (CUL7) from Pongo abelii (Sumatran orangutan).